The chain runs to 305 residues: UPF0450 protein C17orf58 homolog (305 aa).

The N-terminal stretch at 1-22 (MTARALWLLCLIVGWSPEAPVA) is a signal peptide. Residues 18–160 (EAPVAERKAP…DREPETQSCA (143 aa)) form a disordered region. The segment covering 21-39 (VAERKAPPPHRKPDSRETP) has biased composition (basic and acidic residues). Cystine bridges form between C159-C233, C163-C237, and C174-C304. Positions 159–304 (CARACSADAD…QVRGATHTQC (146 aa)) constitute an NTR domain.

Belongs to the UPF0450 family.

This chain is UPF0450 protein C17orf58 homolog, found in Mus musculus (Mouse).